An 89-amino-acid polypeptide reads, in one-letter code: Putative membrane protein insertion efficiency factor (89 aa).

This sequence belongs to the UPF0161 family.

Its subcellular location is the cell inner membrane. Its function is as follows. Could be involved in insertion of integral membrane proteins into the membrane. The polypeptide is Putative membrane protein insertion efficiency factor (Petrotoga mobilis (strain DSM 10674 / SJ95)).